The primary structure comprises 377 residues: Succinyl-diaminopimelate desuccinylase (377 aa).

Residue histidine 67 coordinates Zn(2+). Aspartate 69 is an active-site residue. Aspartate 100 contributes to the Zn(2+) binding site. The Proton acceptor role is filled by glutamate 134. Positions 135, 163, and 349 each coordinate Zn(2+).

The protein belongs to the peptidase M20A family. DapE subfamily. Homodimer. It depends on Zn(2+) as a cofactor. The cofactor is Co(2+).

It carries out the reaction N-succinyl-(2S,6S)-2,6-diaminopimelate + H2O = (2S,6S)-2,6-diaminopimelate + succinate. It functions in the pathway amino-acid biosynthesis; L-lysine biosynthesis via DAP pathway; LL-2,6-diaminopimelate from (S)-tetrahydrodipicolinate (succinylase route): step 3/3. In terms of biological role, catalyzes the hydrolysis of N-succinyl-L,L-diaminopimelic acid (SDAP), forming succinate and LL-2,6-diaminopimelate (DAP), an intermediate involved in the bacterial biosynthesis of lysine and meso-diaminopimelic acid, an essential component of bacterial cell walls. The chain is Succinyl-diaminopimelate desuccinylase from Mannheimia succiniciproducens (strain KCTC 0769BP / MBEL55E).